Consider the following 369-residue polypeptide: Dual specificity protein phosphatase 1-B (369 aa).

The region spanning 21–138 (RAHKCLILDC…FSSQCPEFCN (118 aa)) is the Rhodanese domain. Thr-168 carries the phosphothreonine; by MAPK1 modification. Positions 175–316 (GPVEILPFLY…LLQFESQVLA (142 aa)) constitute a Tyrosine-protein phosphatase domain. Cys-260 functions as the Phosphocysteine intermediate in the catalytic mechanism.

It belongs to the protein-tyrosine phosphatase family. Non-receptor class dual specificity subfamily. Post-translationally, phosphorylated by MAPK1/ERK2 at Thr-168 and at one or more serine residues in a progesterone-dependent manner. Phosphorylation reduces its rate of degradation but does not seem to affect phosphatase activity.

It is found in the nucleus. It catalyses the reaction O-phospho-L-seryl-[protein] + H2O = L-seryl-[protein] + phosphate. The enzyme catalyses O-phospho-L-threonyl-[protein] + H2O = L-threonyl-[protein] + phosphate. It carries out the reaction O-phospho-L-tyrosyl-[protein] + H2O = L-tyrosyl-[protein] + phosphate. Functionally, dual specificity phosphatase that dephosphorylates MAP kinase MAPK1/ERK2 on both 'Thr-188' and 'Tyr-190', regulating its activity during the meiotic cell cycle. The polypeptide is Dual specificity protein phosphatase 1-B (Xenopus laevis (African clawed frog)).